We begin with the raw amino-acid sequence, 217 residues long: Probable transaldolase (217 aa).

The active-site Schiff-base intermediate with substrate is the Lys-83.

This sequence belongs to the transaldolase family. Type 3B subfamily.

It is found in the cytoplasm. The enzyme catalyses D-sedoheptulose 7-phosphate + D-glyceraldehyde 3-phosphate = D-erythrose 4-phosphate + beta-D-fructose 6-phosphate. It participates in carbohydrate degradation; pentose phosphate pathway; D-glyceraldehyde 3-phosphate and beta-D-fructose 6-phosphate from D-ribose 5-phosphate and D-xylulose 5-phosphate (non-oxidative stage): step 2/3. Functionally, transaldolase is important for the balance of metabolites in the pentose-phosphate pathway. This Lactiplantibacillus plantarum (strain ATCC BAA-793 / NCIMB 8826 / WCFS1) (Lactobacillus plantarum) protein is Probable transaldolase.